A 1802-amino-acid chain; its full sequence is Non-reducing polyketide synthase nscA (1802 aa).

The N-terminal acylcarrier protein transacylase domain (SAT) stretch occupies residues 27 to 261 (DLFRRLDQHS…PLPVYDGLCH (235 aa)). A Ketosynthase family 3 (KS3) domain is found at 396–829 (SSKLAIVGMA…GGNTTLLLED (434 aa)). Active-site for beta-ketoacyl synthase activity residues include Cys569, His704, and His747. A malonyl-CoA:ACP transacylase (MAT) domain region spans residues 935–1235 (FTGQGAYYHG…SASAIPSCRR (301 aa)). A product template (PT) domain region spans residues 1322 to 1641 (TSLVHQITAE…RLLMDRFFSP (320 aa)). The segment at 1326-1462 (HQITAETVEA…ATIRFEDPEA (137 aa)) is N-terminal hotdog fold. The 311-residue stretch at 1326 to 1636 (HQITAETVEA…FRRVPRLLMD (311 aa)) folds into the PKS/mFAS DH domain. Residue His1358 is the Proton acceptor; for dehydratase activity of the active site. Residues 1490-1636 (ASRLSKPLAY…FRRVPRLLMD (147 aa)) are C-terminal hotdog fold. Asp1547 acts as the Proton donor; for dehydratase activity in catalysis. Residues 1699-1729 (LLATSSKSSTPKESPIVTPAESERAEPVDNS) are disordered. Positions 1702–1713 (TSSKSSTPKESP) are enriched in low complexity. Positions 1725–1802 (PVDNSMTSQC…EMTAWIEEYC (78 aa)) constitute a Carrier domain. Ser1762 is subject to O-(pantetheine 4'-phosphoryl)serine.

Pantetheine 4'-phosphate is required as a cofactor.

It participates in secondary metabolite biosynthesis. Its function is as follows. Non-reducing polyketide synthase; part of the gene cluster that mediates the biosynthesis of neosartoricin B, a prenylated anthracenone that probably exhibits T-cell antiproliferative activity, suggestive of a physiological role as an immunosuppressive agent. The non-reducing polyketide synthase nscA probably synthesizes and cyclizes the decaketide backbone. The hydrolase nscB then mediates the product release through hydrolysis followed by spontaneous decarboxylation. The prenyltransferase nscD catalyzes the addition of the dimethylallyl group to the aromatic C5. The FAD-dependent monooxygenase nscC is then responsible for the stereospecific hydroxylation at C2. Neosartoricin B can be converted into two additional compounds neosartoricins C and D. Neosartoricin C is a spirocyclic compound that is cyclized through the attack of C3 hydroxyl on C14, followed by dehydration. On the other hand, neosartoricin D is a further cyclized compound in which attack of C2 on C14 in neosartoricin C results in the formation of the acetal-containing dioxabicyclo-octanone ring. Both of these compounds are novel and possibly represent related metabolites of the gene cluster. The polypeptide is Non-reducing polyketide synthase nscA (Trichophyton tonsurans (strain CBS 112818) (Scalp ringworm fungus)).